Consider the following 601-residue polypeptide: Oligoendopeptidase F homolog (601 aa).

His387 provides a ligand contact to Zn(2+). The active site involves Glu388. Zn(2+) contacts are provided by His391 and His394.

Belongs to the peptidase M3 family. Requires Zn(2+) as cofactor.

Functionally, hydrolyzes peptides containing between 7 and 17 amino acids with a rather wide specificity. In Lactococcus lactis subsp. lactis (strain IL1403) (Streptococcus lactis), this protein is Oligoendopeptidase F homolog (pepF).